A 257-amino-acid polypeptide reads, in one-letter code: tRNA pseudouridine synthase A (257 aa).

Residue D57 is the Nucleophile of the active site. Y115 contributes to the substrate binding site.

The protein belongs to the tRNA pseudouridine synthase TruA family. In terms of assembly, homodimer.

The catalysed reaction is uridine(38/39/40) in tRNA = pseudouridine(38/39/40) in tRNA. Functionally, formation of pseudouridine at positions 38, 39 and 40 in the anticodon stem and loop of transfer RNAs. The chain is tRNA pseudouridine synthase A from Lawsonia intracellularis (strain PHE/MN1-00).